The primary structure comprises 1040 residues: ATPase family AAA domain-containing protein 2 (1040 aa).

The span at 1–11 shows a compositional bias: basic residues; it reads MSLLKMRRHAI. The tract at residues 1 to 30 is disordered; that stretch reads MSLLKMRRHAIHSSDSTSSSSSEDDCFERR. Ser65 is modified (phosphoserine). 122-129 is a binding site for ATP; sequence GPPGTGKT. 2 positions are modified to phosphoserine: Ser401 and Ser406. 2 coiled-coil regions span residues 619 to 643 and 735 to 761; these read LTAE…IFLR and YAII…KKRG. The Bromo domain maps to 629-741; the sequence is EQEEDTFREL…DTAYAIIKEE (113 aa). The tract at residues 772 to 799 is disordered; that stretch reads YHVMPKQNSPPVGDKKPDQEQNEKLKVP. Residues Lys777 and Lys797 each participate in a glycyl lysine isopeptide (Lys-Gly) (interchain with G-Cter in SUMO2) cross-link. The segment covering 784-797 has biased composition (basic and acidic residues); that stretch reads GDKKPDQEQNEKLK. Phosphothreonine occurs at positions 801 and 825. Basic residues predominate over residues 811–833; sequence LKRKFHKKSKWHVGTKIKRRKIS. The disordered stretch occupies residues 811–935; the sequence is LKRKFHKKSK…SQVTDIPEDS (125 aa). The segment covering 835-848 has biased composition (polar residues); sequence AKDNSLNAMNSSSR. Ser849, Ser883, and Ser891 each carry phosphoserine. 2 stretches are compositionally biased toward basic and acidic residues: residues 849–863 and 874–885; these read SDTE…EHTE and ESDKQNRLESNI. Residues 901–919 show a composition bias toward basic and acidic residues; sequence EEPKETTEGTELRKDRIVC. Ser951 carries the phosphoserine modification. A Phosphothreonine modification is found at Thr972.

The protein belongs to the AAA ATPase family. As to quaternary structure, interacts with ESR1 and NCOA3 and these interactions are enhanced by estradiol. Interacts with acetylated lysine residues on histone H1.4, H2A, H2B and H3 (in vitro).

The protein resides in the nucleus. The catalysed reaction is ATP + H2O = ADP + phosphate + H(+). May be a transcriptional coactivator of the nuclear receptor ESR1 required to induce the expression of a subset of estradiol target genes, such as CCND1, MYC and E2F1. May play a role in the recruitment or occupancy of CREBBP at some ESR1 target gene promoters. May be required for histone hyperacetylation. The chain is ATPase family AAA domain-containing protein 2 (Atad2) from Mus musculus (Mouse).